Here is a 167-residue protein sequence, read N- to C-terminus: Shikimate kinase (167 aa).

ATP is bound at residue 12-17; that stretch reads GSGKTT. Residue Thr-16 coordinates Mg(2+). 3 residues coordinate substrate: Asp-34, Arg-58, and Gly-80. Position 117 (Arg-117) interacts with ATP. Arg-135 is a substrate binding site. Arg-152 serves as a coordination point for ATP.

It belongs to the shikimate kinase family. In terms of assembly, monomer. Mg(2+) serves as cofactor.

The protein localises to the cytoplasm. The catalysed reaction is shikimate + ATP = 3-phosphoshikimate + ADP + H(+). Its pathway is metabolic intermediate biosynthesis; chorismate biosynthesis; chorismate from D-erythrose 4-phosphate and phosphoenolpyruvate: step 5/7. Catalyzes the specific phosphorylation of the 3-hydroxyl group of shikimic acid using ATP as a cosubstrate. This chain is Shikimate kinase, found in Salinispora tropica (strain ATCC BAA-916 / DSM 44818 / JCM 13857 / NBRC 105044 / CNB-440).